A 601-amino-acid chain; its full sequence is Zinc finger protein 37 (601 aa).

Positions 1-70 constitute a KRAB domain; sequence MATPEPAESD…VRANKNSSSS (70 aa). A Phosphothreonine modification is found at T3. The residue at position 9 (S9) is a Phosphoserine. Residues 30–43 are compositionally biased toward polar residues; that stretch reads ETCSNPASMGNQDP. The tract at residues 30-254 is disordered; that stretch reads ETCSNPASMG…SKSDKAPGSG (225 aa). A compositionally biased stretch (low complexity) spans 60–70; it reads SVRANKNSSSS. The span at 77–88 shows a compositional bias: polar residues; it reads TGTSAKVQQDGA. Composition is skewed to basic and acidic residues over residues 115-136, 164-174, and 183-238; these read KSSE…PSEK, KKPDTANEYRK, and VNRD…EKRK. Residues 257–279 form a C2H2-type 1 zinc finger; it reads YECNQCGKVLSHKQGLLDHQRTH. The segment at 285–303 adopts a C2H2-type 2; atypical zinc-finger fold; that stretch reads YECYECGIAFSQKSHLVVH. 10 C2H2-type zinc fingers span residues 314 to 337, 343 to 365, 371 to 393, 399 to 421, 427 to 449, 455 to 477, 483 to 505, 511 to 533, 539 to 561, and 570 to 592; these read YECV…RISH, YKCN…IRSH, YECK…VRTH, YECN…MRIH, FECT…QRTH, YKCK…MRTH, FECN…QRVH, YECV…QRTH, FECY…QRSH, and YECV…MKTH.

This sequence belongs to the krueppel C2H2-type zinc-finger protein family. Expressed in testes, brain, kidney, spleen, thymus, lung, and at low levels in liver.

It is found in the nucleus. Its function is as follows. May be involved in transcriptional regulation. The sequence is that of Zinc finger protein 37 (Zfp37) from Rattus norvegicus (Rat).